Here is a 505-residue protein sequence, read N- to C-terminus: MGETLGDSPIDPESDSFTDTLSANISQEMTMVDTEMPFWPTNFGISSVDLSVMEDHSHSFDIKPFTTVDFSSISTPHYEDIPFTRTDPVVADYKYDLKLQEYQSAIKVEPASPPYYSEKTQLYNKPHEEPSNSLMAIECRVCGDKASGFHYGVHACEGCKGFFRRTIRLKLIYDRCDLNCRIHKKSRNKCQYCRFQKCLAVGMSHNAIRFGRMPQAEKEKLLAEISSDIDQLNPESADLRALAKHLYDSYIKSFPLTKAKARAILTGKTTDKSPFVIYDMNSLMMGEDKIKFKHITPLQEQSKEVAIRIFQGCQFRSVEAVQEITEYAKSIPGFVNLDLNDQVTLLKYGVHEIIYTMLASLMNKDGVLISEGQGFMTREFLKSLRKPFGDFMEPKFEFAVKFNALELDDSDLAIFIAVIILSGDRPGLLNVKPIEDIQDNLLQALELQLKLNHPESSQLFAKLLQKMTDLRQIVTEHVQLLQVIKKTETDMSLHPLLQEIYKDLY.

O-linked (GlcNAc) threonine glycosylation is present at Thr-84. Ser-112 carries the phosphoserine modification. The segment at residues 136 to 210 (AIECRVCGDK…VGMSHNAIRF (75 aa)) is a DNA-binding region (nuclear receptor). 2 NR C4-type zinc fingers span residues 139–159 (CRVC…CEGC) and 176–198 (CDLN…FQKC). Positions 205–280 (HNAIRFGRMP…DKSPFVIYDM (76 aa)) are interaction with FAM120B. One can recognise an NR LBD domain in the interval 238–503 (DLRALAKHLY…HPLLQEIYKD (266 aa)). Residue Lys-252 forms a Glycyl lysine isopeptide (Lys-Gly) (interchain with G-Cter in ubiquitin) linkage. Rosiglitazone-binding positions include 314–317 (QFRS), His-351, His-477, and Tyr-501. The 9aaTAD signature appears at 495-503 (PLLQEIYKD).

Belongs to the nuclear hormone receptor family. NR1 subfamily. Interacts with FOXO1 (acetylated form). Heterodimer with other nuclear receptors, such as RXRA. The heterodimer with the retinoic acid receptor RXRA is called adipocyte-specific transcription factor ARF6. Interacts with NCOA6 coactivator, leading to a strong increase in transcription of target genes. Interacts with coactivator PPARBP, leading to a mild increase in transcription of target genes. Interacts with NOCA7 in a ligand-inducible manner. Interacts with NCOA1 and NCOA2 LXXLL motifs. Interacts with ASXL1, ASXL2, DNTTIP2, FAM120B, MAP2K1/MEK1, NR0B2, PDPK1, PRDM16, PRMT2 and TGFB1I1. Interacts (when activated by agonist) with PPP5C. Interacts with HELZ2 and THRAP3; the interaction stimulates the transcriptional activity of PPARG. Interacts with PER2, the interaction is ligand dependent and blocks PPARG recruitment to target promoters. Interacts with NOCT. Interacts with ACTN4. Interacts (when in the liganded conformation) with GPS2. Interacts with CRY1 and CRY2 in a ligand-dependent manner. In the absence of hormonal ligand, interacts with TACC1. In macrophages, interacts with PAQR3 and STUB1; the interactions promote PPARG poylubiquitination and STUB1-mediated degradation. O-GlcNAcylation at Thr-84 reduces transcriptional activity in adipocytes. In terms of processing, phosphorylated in basal conditions and dephosphorylated when treated with the ligand. May be dephosphorylated by PPP5C. The phosphorylated form may be inactive and dephosphorylation at Ser-112 induces adipogenic activity. Post-translationally, ubiquitinated by E3 ubiquitin-protein ligase complex containing FBXO9; leading to proteasomal degradation. Ubiquitinated at Lys-252 by TRIM55 leading to proteasomal degradation. Ubiquitinated by E3 ubiquitin-protein ligase STUB1/CHIP; leading to proteasomal degradation. Highest expression in adipose tissue. Lower in skeletal muscle, spleen, heart and liver. Also detectable in placenta, lung and ovary.

It is found in the nucleus. The protein resides in the cytoplasm. Its activity is regulated as follows. PDPK1 activates its transcriptional activity independently of its kinase activity. Nuclear receptor that binds peroxisome proliferators such as hypolipidemic drugs and fatty acids. Once activated by a ligand, the nuclear receptor binds to DNA specific PPAR response elements (PPRE) and modulates the transcription of its target genes, such as acyl-CoA oxidase. It therefore controls the peroxisomal beta-oxidation pathway of fatty acids. Key regulator of adipocyte differentiation and glucose homeostasis. ARF6 acts as a key regulator of the tissue-specific adipocyte P2 (aP2) enhancer. Acts as a critical regulator of gut homeostasis by suppressing NF-kappa-B-mediated pro-inflammatory responses. Plays a role in the regulation of cardiovascular circadian rhythms by regulating the transcription of BMAL1 in the blood vessels. In terms of biological role, (Microbial infection) Upon treatment with M.tuberculosis or its lipoprotein LpqH, phosphorylation of MAPK p38 and IL-6 production are modulated, probably via this protein. The chain is Peroxisome proliferator-activated receptor gamma (PPARG) from Homo sapiens (Human).